A 221-amino-acid polypeptide reads, in one-letter code: Histone H1C (221 aa).

Composition is skewed to low complexity over residues 1-11 and 27-44; these read MTETAATETTP and KKAA…PSAS. Disordered stretches follow at residues 1–44 and 123–221; these read MTET…PSAS and AKKK…AAKK. Positions 39–112 constitute an H15 domain; the sequence is SGPSASELIV…GASGSFKLNK (74 aa). 2 stretches are compositionally biased toward basic residues: residues 123 to 150 and 158 to 221; these read AKKK…KPKK and SPKK…AAKK.

It belongs to the histone H1/H5 family.

Its subcellular location is the nucleus. It localises to the chromosome. In terms of biological role, histones H1 are necessary for the condensation of nucleosome chains into higher-order structures. The chain is Histone H1C from Xenopus laevis (African clawed frog).